The primary structure comprises 492 residues: Aerolysin-4 (492 aa).

The signal sequence occupies residues 1–23; that stretch reads MKKLKITGLSLIISGLLMAQAQA. 2 disulfides stabilise this stretch: C42–C98 and C182–C187. An interaction with host N-linked glycan region spans residues 68-84; it reads WQISGLANGWVIMGPGY. The part of the transmembrane beta-barrel after proteolytic activation of the toxin and insertion into the host membrane stretch occupies residues 256 to 288; sequence YGLSEKVTTKNKFKWPLVGETELSIEIAANQSW. The tract at residues 346-355 is interaction with glycans from host GPI-anchor; the sequence is RWGGNAWYTH. Positions 446–492 are excised as a propeptide; sequence AAASHSSRARNLSAGQGLRLEIPLDAQELSGLGFNNVSLSVTPAANQ.

It belongs to the aerolysin family. Homodimer in solution; homoheptamer in the host membrane. After binding to GPI-anchored proteins in target membranes and proteolytic removal of the C-terminal propeptide, the protein assembles into a heptameric pre-pore complex. A further conformation change leads to insertion into the host membrane. Proteolytic cleavage and subsequent release of the propeptide trigger a major conformation change, leading to the formation of a heptameric pre-pore that then inserts into the host membrane.

It is found in the secreted. Its subcellular location is the host cell membrane. In terms of biological role, secreted, cytolytic toxin that forms pores in host membranes after proteolytic removal of a C-terminal propeptide, leading to destruction of the membrane permeability barrier and cell death. The pores are formed by transmembrane beta-strands and are approximately 3 nm in diameter. The protein is Aerolysin-4 (ahh4) of Aeromonas hydrophila.